We begin with the raw amino-acid sequence, 371 residues long: Alanine dehydrogenase (371 aa).

Substrate is bound by residues arginine 15 and lysine 74. Residue histidine 95 is the Proton donor/acceptor of the active site. NAD(+) is bound by residues serine 133, 177–178 (QA), aspartate 197, serine 219, 238–239 (VL), 266–269 (IAID), arginine 279, and 298–301 (VANM). Aspartate 269 functions as the Proton donor/acceptor in the catalytic mechanism.

It belongs to the AlaDH/PNT family. As to quaternary structure, homohexamer. Trimer of dimer.

The enzyme catalyses L-alanine + NAD(+) + H2O = pyruvate + NH4(+) + NADH + H(+). It functions in the pathway amino-acid degradation; L-alanine degradation via dehydrogenase pathway; NH(3) and pyruvate from L-alanine: step 1/1. Catalyzes the reversible reductive amination of pyruvate to L-alanine. May play a role in cell wall synthesis as L-alanine is an important constituent of the peptidoglycan layer. The chain is Alanine dehydrogenase (ald) from Staphylococcus saprophyticus subsp. saprophyticus (strain ATCC 15305 / DSM 20229 / NCIMB 8711 / NCTC 7292 / S-41).